The sequence spans 1141 residues: LRR receptor-like serine/threonine-protein kinase RGI1 (1141 aa).

The first 33 residues, 1 to 33, serve as a signal peptide directing secretion; it reads MSLHSLIFFSSSSSSLLFSFFFIFIFCFSLSDA. Topologically, residues 34–726 are extracellular; the sequence is EQNPEASILY…DASRTRKLRL (693 aa). A disulfide bridge connects residues Cys-69 and Cys-77. Asn-71 carries N-linked (GlcNAc...) asparagine glycosylation. 25 LRR repeats span residues 80 to 104, 105 to 128, 130 to 152, 153 to 176, 178 to 200, 202 to 225, 226 to 249, 250 to 273, 275 to 297, 298 to 321, 322 to 345, 347 to 369, 370 to 392, 394 to 417, 418 to 441, 443 to 464, 465 to 489, 490 to 513, 514 to 537, 538 to 561, 563 to 585, 586 to 609, 610 to 634, 636 to 657, and 658 to 682; these read QGFITDIDIESVPLQLSLPKNLPAF, RSLQKLTISGANLTGTLPESLGDC, GLKVLDLSSNGLVGDIPWSLSKL, RNLETLILNSNQLTGKIPPDISKC, KLKSLILFDNLLTGSIPTELGKL, GLEVIRIGGNKEISGQIPSEIGDC, SNLTVLGLAETSVSGNLPSSLGKL, KKLETLSIYTTMISGEIPSDLGNC, ELVDLFLYENSLSGSIPREIGQL, TKLEQLFLWQNSLVGGIPEEIGNC, SNLKMIDLSLNLLSGSIPSSIGRL, FLEEFMISDNKFSGSIPTTISNC, SSLVQLQLDKNQISGLIPSELGT, TKLTLFFAWSNQLEGSIPPGLADC, TDLQALDLSRNSLTGTIPSGLFML, NLTKLLLISNSLSGFIPQEIGN, CSSLVRLRLGFNRITGEIPSGIGSL, KKINFLDFSSNRLHGKVPDEIGSC, SELQMIDLSNNSLEGSLPNPVSSL, SGLQVLDVSANQFSGKIPASLGRL, SLNKLILSKNLFSGSIPTSLGMC, SGLQLLDLGSNELSGEIPSELGDI, ENLEIALNLSSNRLTGKIPSKIASL, KLSILDLSHNMLEGDLAPLANI, and ENLVSLNISYNSFSGYLPDNKLFRQ. N-linked (GlcNAc...) asparagine glycosylation is present at Asn-116. Short sequence motifs (small peptide recognition) lie at residues 185–186 and 207–210; these read FD and RIGG. Residue Asn-227 is glycosylated (N-linked (GlcNAc...) asparagine). 2 consecutive short sequence motifs (small peptide recognition) follow at residues 230–235 and Tyr-258; that span reads VLGLAE. Asn-272 is a glycosylation site (N-linked (GlcNAc...) asparagine). The Small peptide recognition motif lies at 280–282; that stretch reads FLY. A glycan (N-linked (GlcNAc...) asparagine) is linked at Asn-320. 2 consecutive short sequence motifs (small peptide recognition) follow at residues 328-331 and 350-352; these read DLSL and EFM. Asn-368 is a glycosylation site (N-linked (GlcNAc...) asparagine). Short sequence motifs (small peptide recognition) lie at residues 398–402 and 424–427; these read LFFAW and DLSR. N-linked (GlcNAc...) asparagine glycosylation is present at Asn-443. Residues 446–450 carry the Small peptide recognition motif; the sequence is KLLLI. Asn-464 is a glycosylation site (N-linked (GlcNAc...) asparagine). Positions 470–472 match the Small peptide recognition motif; sequence RLR. Residue Asn-523 is glycosylated (N-linked (GlcNAc...) asparagine). The N-linked (GlcNAc...) asparagine glycan is linked to Asn-617. N-linked (GlcNAc...) asparagine glycosylation is present at Asn-664. A helical membrane pass occupies residues 727-747; that stretch reads TLALLITLTVVLMILGAVAVI. Residues 748 to 1141 lie on the Cytoplasmic side of the membrane; sequence RARRNIDNER…LLYSSSSSIE (394 aa). The Protein kinase domain maps to 786–1074; the sequence is LVEPNVIGKG…EIKQEREEYA (289 aa). ATP-binding positions include 792–800 and Lys-814; that span reads IGKGCSGVV. Tyr-868 and Tyr-906 each carry phosphotyrosine. Asp-919 serves as the catalytic Proton acceptor. Phosphotyrosine is present on residues Tyr-962 and Tyr-969.

The protein belongs to the protein kinase superfamily. Ser/Thr protein kinase family. In terms of assembly, interacts with beet curly top virus AL4/C4. Binds to RGF peptides such as RGF1, GLV5/CLEL1/RGF2, GLV7/CLEL3/RGF3, GLV3/RGF4, GLV10/CLEL7/RGF5 and RGF10/CLELN; these interactions trigger the formation of heterodimers with SERK1, SERK2 or BAK1/SERK3 via LRR regions. Interacts with UBP13. Phosphorylated and ubiquitinated upon interaction with RGF1, thus leading to activation a subsequent degradation. Stabilized by UBP12 and UBP13-mediated deubiquitination. Post-translationally, autophosphorylated. In terms of tissue distribution, expressed in roots.

It is found in the cell membrane. It carries out the reaction L-seryl-[protein] + ATP = O-phospho-L-seryl-[protein] + ADP + H(+). The catalysed reaction is L-threonyl-[protein] + ATP = O-phospho-L-threonyl-[protein] + ADP + H(+). Its function is as follows. Together with RGI2, RGI3, RGI4 and RGI5, acts as a receptor of RGF peptides (e.g. RGF1, GLV5/CLEL1/RGF2, GLV7/CLEL3/RGF3, GLV3/RGF4, GLV10/CLEL7/RGF5 and RGF10/CLELN), peptide hormones which maintain the postembryonic root stem cell niche by regulating the expression levels and patterns of the transcription factor PLETHORA (PLT, e.g. PLT1 and PLT2). Links RGF peptides signal with their downstream components. The polypeptide is LRR receptor-like serine/threonine-protein kinase RGI1 (Arabidopsis thaliana (Mouse-ear cress)).